A 311-amino-acid polypeptide reads, in one-letter code: JNK1/MAPK8-associated membrane protein (311 aa).

Over 1 to 57 the chain is Lumenal; it reads MAVDIQPACLGLYCGKTLLFKNGSSEIYGECGVCPRGQRTNAQKYCQPCTESPELYD. Residue asparagine 22 is glycosylated (N-linked (GlcNAc...) asparagine). Residues 58 to 78 form a helical membrane-spanning segment; the sequence is WLYLGFMAMLPLVLHWFFIEW. The Cytoplasmic segment spans residues 79-87; sequence YSGKKSSSA. Residues 88-108 form a helical membrane-spanning segment; the sequence is LFQHITALFECTMAAIITLLV. The Lumenal segment spans residues 109 to 149; sequence SDPVGVLYIRSCRVLMLSDWYTMLYNPSPDYVTTVHCTHEA. The chain crosses the membrane as a helical span at residues 150-170; it reads VYPLYTIVFVYYAFCLVLMML. Over 171–188 the chain is Cytoplasmic; the sequence is LRPLLVKKIACGLGKSDR. The helical transmembrane segment at 189–209 threads the bilayer; sequence FKSIYAALYFFPILTVLQAVG. Glycine 210 is a topological domain (lumenal). A helical transmembrane segment spans residues 211 to 231; sequence GLLYYAFPYIILVLSLVTLAV. The Cytoplasmic portion of the chain corresponds to 232–250; sequence YMSASEIENCYDLLVRKKR. A helical membrane pass occupies residues 251-271; it reads LIVLFSHWLLHAYGIVSISRV. At 272-277 the chain is on the lumenal side; it reads DRLEHD. The helical transmembrane segment at 278-298 threads the bilayer; it reads LPLLALVPTPALFYLFTAKFT. Over 299–311 the chain is Cytoplasmic; it reads EPSRILSEGANGH.

Interacts with RNF5 and MAPK8, but not with MAPK9. Binding to MAPK8 occurs before and after exposure to stress, such as UV irradiation. After exposure to stress, interacts with phosphorylated MAPK8. Competes with DUSP10 for MAPK8 binding. Associates with multiple components of the proteasome and with ERAD regulatory proteins, including AMFR/GP78, CANX, PSMC1, PSMC2, PSMC3/TBP1, PSMC5, PSMC6, PSMD8, SEC61-ALPHA and UFD1. In terms of processing, ubiquitinated by RNF5 via 'Lys-63'-linked ubiquitin linkage in a UBE2N-dependent manner. Ubiquitination decreases association with components of the proteasome and ERAD. Expressed in numerous tissues, including brain, spleen, thymus, liver, kidney and testis.

The protein localises to the endoplasmic reticulum membrane. In terms of biological role, regulates the duration of MAPK8 activity in response to various stress stimuli. Facilitates degradation of misfolded endoplasmic reticulum (ER) proteins through the recruitment of components of the proteasome and endoplasmic reticulum-associated degradation (ERAD) system. This Mus musculus (Mouse) protein is JNK1/MAPK8-associated membrane protein (Jkamp).